A 180-amino-acid chain; its full sequence is NADH-quinone oxidoreductase subunit I (180 aa).

4Fe-4S ferredoxin-type domains follow at residues 50–80 (LTRD…LQKA) and 90–119 (EFFR…LTPD). [4Fe-4S] cluster is bound by residues Cys60, Cys63, Cys66, Cys70, Cys99, Cys102, Cys105, and Cys109.

The protein belongs to the complex I 23 kDa subunit family. NDH-1 is composed of 13 different subunits. Subunits NuoA, H, J, K, L, M, N constitute the membrane sector of the complex. Requires [4Fe-4S] cluster as cofactor.

The protein resides in the cell inner membrane. The catalysed reaction is a quinone + NADH + 5 H(+)(in) = a quinol + NAD(+) + 4 H(+)(out). NDH-1 shuttles electrons from NADH, via FMN and iron-sulfur (Fe-S) centers, to quinones in the respiratory chain. The immediate electron acceptor for the enzyme in this species is believed to be ubiquinone. Couples the redox reaction to proton translocation (for every two electrons transferred, four hydrogen ions are translocated across the cytoplasmic membrane), and thus conserves the redox energy in a proton gradient. The sequence is that of NADH-quinone oxidoreductase subunit I from Shigella boydii serotype 4 (strain Sb227).